Here is a 155-residue protein sequence, read N- to C-terminus: Histone H3-like centromeric protein hH3v (155 aa).

Over residues 1-24 the composition is skewed to low complexity; that stretch reads MPPKKGGVTKSKAVSKKAAAVPTP. The segment at 1–56 is disordered; the sequence is MPPKKGGVTKSKAVSKKAAAVPTPKATPPGRRKSRASSVQPGDPVPQGKKRRYRPG. The tract at residues 45–148 is H3-like; it reads VPQGKKRRYR…IQLARRIRGV (104 aa).

The protein belongs to the histone H3 family. Component of centromeric nucleosomes, where DNA is wrapped around a histone octamer core. The octamer contains two molecules each of H2A, H2B, hH3v/CENPA and H4 assembled in one hH3v-H4 heterotetramer and two H2A-H2B heterodimers. Interacts with the inner kinetochore. In terms of processing, ubiquitinated. Is degraded through ubiquitin-mediated proteolysis when not protected by its association to the kinetochore.

It localises to the nucleus. The protein resides in the chromosome. It is found in the centromere. Its function is as follows. Histone H3-like nucleosomal protein that is specifically found in centromeric nucleosomes. Replaces conventional H3 in the nucleosome core of centromeric chromatin that serves as an assembly site for the inner kinetochore. Required for recruitment and assembly of kinetochore proteins, mitotic progression and chromosome segregation. May serve as an epigenetic mark that propagates centromere identity through replication and cell division. The sequence is that of Histone H3-like centromeric protein hH3v (hH3v) from Neurospora crassa (strain ATCC 24698 / 74-OR23-1A / CBS 708.71 / DSM 1257 / FGSC 987).